A 613-amino-acid chain; its full sequence is Dihydroxy-acid dehydratase 3 (613 aa).

A Mg(2+)-binding site is contributed by Asp-81. Cys-122 lines the [2Fe-2S] cluster pocket. Asp-123 and Lys-124 together coordinate Mg(2+). Lys-124 carries the post-translational modification N6-carboxylysine. Cys-197 lines the [2Fe-2S] cluster pocket. A Mg(2+)-binding site is contributed by Glu-493. The active-site Proton acceptor is Ser-519.

This sequence belongs to the IlvD/Edd family. In terms of assembly, homodimer. The cofactor is [2Fe-2S] cluster. Requires Mg(2+) as cofactor.

The catalysed reaction is (2R)-2,3-dihydroxy-3-methylbutanoate = 3-methyl-2-oxobutanoate + H2O. It catalyses the reaction (2R,3R)-2,3-dihydroxy-3-methylpentanoate = (S)-3-methyl-2-oxopentanoate + H2O. It participates in amino-acid biosynthesis; L-isoleucine biosynthesis; L-isoleucine from 2-oxobutanoate: step 3/4. Its pathway is amino-acid biosynthesis; L-valine biosynthesis; L-valine from pyruvate: step 3/4. Functionally, functions in the biosynthesis of branched-chain amino acids. Catalyzes the dehydration of (2R,3R)-2,3-dihydroxy-3-methylpentanoate (2,3-dihydroxy-3-methylvalerate) into 2-oxo-3-methylpentanoate (2-oxo-3-methylvalerate) and of (2R)-2,3-dihydroxy-3-methylbutanoate (2,3-dihydroxyisovalerate) into 2-oxo-3-methylbutanoate (2-oxoisovalerate), the penultimate precursor to L-isoleucine and L-valine, respectively. In Nocardia farcinica (strain IFM 10152), this protein is Dihydroxy-acid dehydratase 3.